The chain runs to 170 residues: Crossover junction endodeoxyribonuclease RuvC (170 aa).

Active-site residues include Asp-9, Glu-70, and Asp-145. Mg(2+) contacts are provided by Asp-9, Glu-70, and Asp-145.

Belongs to the RuvC family. As to quaternary structure, homodimer which binds Holliday junction (HJ) DNA. The HJ becomes 2-fold symmetrical on binding to RuvC with unstacked arms; it has a different conformation from HJ DNA in complex with RuvA. In the full resolvosome a probable DNA-RuvA(4)-RuvB(12)-RuvC(2) complex forms which resolves the HJ. The cofactor is Mg(2+).

Its subcellular location is the cytoplasm. The enzyme catalyses Endonucleolytic cleavage at a junction such as a reciprocal single-stranded crossover between two homologous DNA duplexes (Holliday junction).. In terms of biological role, the RuvA-RuvB-RuvC complex processes Holliday junction (HJ) DNA during genetic recombination and DNA repair. Endonuclease that resolves HJ intermediates. Cleaves cruciform DNA by making single-stranded nicks across the HJ at symmetrical positions within the homologous arms, yielding a 5'-phosphate and a 3'-hydroxyl group; requires a central core of homology in the junction. The consensus cleavage sequence is 5'-(A/T)TT(C/G)-3'. Cleavage occurs on the 3'-side of the TT dinucleotide at the point of strand exchange. HJ branch migration catalyzed by RuvA-RuvB allows RuvC to scan DNA until it finds its consensus sequence, where it cleaves and resolves the cruciform DNA. The sequence is that of Crossover junction endodeoxyribonuclease RuvC from Chlamydia muridarum (strain MoPn / Nigg).